Here is a 247-residue protein sequence, read N- to C-terminus: 3,4-dihydroxy-2-butanone 4-phosphate synthase (247 aa).

D-ribulose 5-phosphate is bound by residues 38 to 39 (RE), D43, 179 to 183 (RMGQT), and E203. E39 is a binding site for Mg(2+).

This sequence belongs to the DHBP synthase family. Homodimer. It depends on Mg(2+) as a cofactor. The cofactor is Mn(2+).

The catalysed reaction is D-ribulose 5-phosphate = (2S)-2-hydroxy-3-oxobutyl phosphate + formate + H(+). Its pathway is cofactor biosynthesis; riboflavin biosynthesis; 2-hydroxy-3-oxobutyl phosphate from D-ribulose 5-phosphate: step 1/1. In terms of biological role, catalyzes the conversion of D-ribulose 5-phosphate to formate and 3,4-dihydroxy-2-butanone 4-phosphate. The polypeptide is 3,4-dihydroxy-2-butanone 4-phosphate synthase (Methanosarcina mazei (strain ATCC BAA-159 / DSM 3647 / Goe1 / Go1 / JCM 11833 / OCM 88) (Methanosarcina frisia)).